We begin with the raw amino-acid sequence, 103 residues long: Thrombin inhibitor rhodniin (103 aa).

2 consecutive Kazal-like domains span residues 1–50 (EGGE…PCEP) and 51–103 (DEDE…PCRT). 6 disulfide bridges follow: Cys-6-Cys-31, Cys-8-Cys-27, Cys-16-Cys-48, Cys-57-Cys-84, Cys-60-Cys-80, and Cys-69-Cys-101.

The protein localises to the secreted. In terms of biological role, thrombin-specific inhibitor. Appears to form 1:1 complexes with thrombin. Prevents blood clotting to allow the insect to feed on blood. This is Thrombin inhibitor rhodniin from Rhodnius prolixus (Triatomid bug).